Here is a 315-residue protein sequence, read N- to C-terminus: Cytochrome c biogenesis protein CcsA (315 aa).

Helical transmembrane passes span 15 to 35 (SCFL…GFGG), 39 to 59 (FSFT…LQLI), 73 to 93 (LYES…YIEV), 97 to 117 (TLFL…FTDF), 144 to 164 (VMIA…AYLV), 222 to 242 (TIGI…IWAN), 257 to 277 (WAFI…VGGW), and 283 to 303 (ALVA…VNLL).

Belongs to the CcmF/CycK/Ccl1/NrfE/CcsA family. As to quaternary structure, may interact with Ccs1.

The protein localises to the plastid. It localises to the chloroplast thylakoid membrane. Its function is as follows. Required during biogenesis of c-type cytochromes (cytochrome c6 and cytochrome f) at the step of heme attachment. The chain is Cytochrome c biogenesis protein CcsA from Chlorella vulgaris (Green alga).